The primary structure comprises 479 residues: GMP reductase (479 aa).

CBS domains follow at residues 96–153 (VLDT…VRDI) and 154–212 (AVTD…ATDS). NADP(+) is bound by residues 246-248 (DTA) and 296-298 (GVG). The active-site Thioimidate intermediate is Cys303.

Belongs to the IMPDH/GMPR family. GuaB1 subfamily. It depends on a monovalent cation as a cofactor.

It catalyses the reaction IMP + NH4(+) + NADP(+) = GMP + NADPH + 2 H(+). The protein operates within purine metabolism; IMP biosynthesis via salvage pathway. In terms of biological role, involved in the purine-salvage pathway. Catalyzes the NADPH-dependent conversion of GMP to IMP. The protein is GMP reductase of Mycobacterium bovis (strain ATCC BAA-935 / AF2122/97).